A 350-amino-acid polypeptide reads, in one-letter code: Putative ATP-binding protein BRA0745/BS1330_II0738 (350 aa).

The 231-residue stretch at 4-234 (VSLRGISKTF…PANKFVAGFI (231 aa)) folds into the ABC transporter domain. 36 to 43 (GPSGCGKS) contributes to the ATP binding site.

The protein belongs to the ABC transporter superfamily. In terms of assembly, the complex is composed of two ATP-binding proteins (BRA0745), two transmembrane proteins (BRA0749) and a solute-binding protein (BRA0748).

The protein resides in the cell inner membrane. Probably part of an ABC transporter complex. Probably responsible for energy coupling to the transport system. This chain is Putative ATP-binding protein BRA0745/BS1330_II0738, found in Brucella suis biovar 1 (strain 1330).